The following is a 362-amino-acid chain: Cobalt-precorrin-5B C(1)-methyltransferase (362 aa).

The protein belongs to the CbiD family.

The enzyme catalyses Co-precorrin-5B + S-adenosyl-L-methionine = Co-precorrin-6A + S-adenosyl-L-homocysteine. The protein operates within cofactor biosynthesis; adenosylcobalamin biosynthesis; cob(II)yrinate a,c-diamide from sirohydrochlorin (anaerobic route): step 6/10. Its function is as follows. Catalyzes the methylation of C-1 in cobalt-precorrin-5B to form cobalt-precorrin-6A. The sequence is that of Cobalt-precorrin-5B C(1)-methyltransferase from Burkholderia vietnamiensis (strain G4 / LMG 22486) (Burkholderia cepacia (strain R1808)).